The chain runs to 94 residues: Late cornified envelope-like proline-rich protein 1 (94 aa).

Disordered stretches follow at residues 1-26 and 47-94; these read MSSD…CEQK and CPRE…PPPE. A compositionally biased stretch (pro residues) spans 53–94; that stretch reads PAPPKCPPCPSPSPSSCPPKPCAKPCPPKCPSSCPPPCPPPE.

Belongs to the cornifin (SPRR) family.

The protein is Late cornified envelope-like proline-rich protein 1 (LELP1) of Macaca fascicularis (Crab-eating macaque).